Consider the following 969-residue polypeptide: Isoleucine--tRNA ligase (969 aa).

A 'HIGH' region motif is present at residues 70–80; the sequence is PYANGAIHIGH. Residue glutamate 601 coordinates L-isoleucyl-5'-AMP. The 'KMSKS' region motif lies at 642–646; sequence KMSKS. Residue lysine 645 coordinates ATP.

Belongs to the class-I aminoacyl-tRNA synthetase family. IleS type 1 subfamily. In terms of assembly, monomer.

Its subcellular location is the cytoplasm. The catalysed reaction is tRNA(Ile) + L-isoleucine + ATP = L-isoleucyl-tRNA(Ile) + AMP + diphosphate. Catalyzes the attachment of isoleucine to tRNA(Ile). As IleRS can inadvertently accommodate and process structurally similar amino acids such as valine, to avoid such errors it has two additional distinct tRNA(Ile)-dependent editing activities. One activity is designated as 'pretransfer' editing and involves the hydrolysis of activated Val-AMP. The other activity is designated 'posttransfer' editing and involves deacylation of mischarged Val-tRNA(Ile). This is Isoleucine--tRNA ligase from Caulobacter vibrioides (strain ATCC 19089 / CIP 103742 / CB 15) (Caulobacter crescentus).